The sequence spans 313 residues: HPr kinase/phosphorylase (313 aa).

Residues H140 and K161 contribute to the active site. 155 to 162 provides a ligand contact to ATP; that stretch reads GNSGAGKS. Mg(2+) is bound at residue S162. The active-site Proton acceptor; for phosphorylation activity. Proton donor; for dephosphorylation activity is D179. Residues 203–212 are important for the catalytic mechanism of both phosphorylation and dephosphorylation; the sequence is IEVRGLGILN. E204 lines the Mg(2+) pocket. R246 is an active-site residue. The important for the catalytic mechanism of dephosphorylation stretch occupies residues 267–272; it reads PVAAGR.

Belongs to the HPrK/P family. In terms of assembly, homohexamer. The cofactor is Mg(2+).

The catalysed reaction is [HPr protein]-L-serine + ATP = [HPr protein]-O-phospho-L-serine + ADP + H(+). It carries out the reaction [HPr protein]-O-phospho-L-serine + phosphate + H(+) = [HPr protein]-L-serine + diphosphate. In terms of biological role, catalyzes the ATP- as well as the pyrophosphate-dependent phosphorylation of a specific serine residue in HPr, a phosphocarrier protein of the phosphoenolpyruvate-dependent sugar phosphotransferase system (PTS). HprK/P also catalyzes the pyrophosphate-producing, inorganic phosphate-dependent dephosphorylation (phosphorolysis) of seryl-phosphorylated HPr (P-Ser-HPr). In Aromatoleum aromaticum (strain DSM 19018 / LMG 30748 / EbN1) (Azoarcus sp. (strain EbN1)), this protein is HPr kinase/phosphorylase.